The following is a 196-amino-acid chain: Probable thymidylate kinase (196 aa).

Position 7-14 (7-14 (GIDGSGKS)) interacts with ATP.

The protein belongs to the thymidylate kinase family.

The catalysed reaction is dTMP + ATP = dTDP + ADP. This is Probable thymidylate kinase from Natronomonas pharaonis (strain ATCC 35678 / DSM 2160 / CIP 103997 / JCM 8858 / NBRC 14720 / NCIMB 2260 / Gabara) (Halobacterium pharaonis).